Reading from the N-terminus, the 760-residue chain is Serine/threonine-protein kinase dkf-1 (760 aa).

2 consecutive Phorbol-ester/DAG-type zinc fingers follow at residues Pro-103–Val-153 and Pro-194–Cys-244. In terms of domain architecture, PH spans Lys-316–Pro-444. Residues Val-464–Leu-725 form the Protein kinase domain. ATP contacts are provided by residues Leu-470 to Val-478 and Lys-493. The active-site Proton acceptor is the Asp-589. Thr-626 carries the post-translational modification Phosphothreonine.

It belongs to the protein kinase superfamily. CAMK Ser/Thr protein kinase family. PKD subfamily. The cofactor is Mg(2+). Post-translationally, prolonged phosphorylation at Thr-626 results in ubiquitination and degradation.

The protein localises to the cytoplasm. It is found in the membrane. The catalysed reaction is L-seryl-[protein] + ATP = O-phospho-L-seryl-[protein] + ADP + H(+). The enzyme catalyses L-threonyl-[protein] + ATP = O-phospho-L-threonyl-[protein] + ADP + H(+). Activated by DAG and phorbol esters. Phorbol-ester/DAG-type domain 1 binds phorbol ester with high affinity and mediates accumulation at the cell periphery. Phorbol-ester/DAG-type domain 2 binds phorbol ester with low affinity but may mediate initial contact, resulting in a conformational change allowing previously occluded domain 1 to anchor the kinase. Phosphorylation on Thr-626 is then also required for activation and may also result in a further conformational change. Converts transient diacylglycerol (DAG) signals into prolonged physiological effects, independently of PKC. Role in the regulation of growth and neuromuscular control of movement. Involved in immune response to S.aureus bacterium by activating transcription factor hlh-30 downstream of phospholipase plc-1. In Caenorhabditis briggsae, this protein is Serine/threonine-protein kinase dkf-1.